The primary structure comprises 523 residues: 11-oxo-beta-amyrin 30-oxidase (523 aa).

The chain crosses the membrane as a helical span at residues 9-29 (AIWVVLTVILAAIPIWVCHMV). Residue Cys471 participates in heme binding.

This sequence belongs to the cytochrome P450 family. Requires heme as cofactor. In terms of tissue distribution, expressed in roots, stolons and stems. Not detected in leaves.

It localises to the membrane. The enzyme catalyses 11-oxo-beta-amyrin + 3 reduced [NADPH--hemoprotein reductase] + 3 O2 = glycyrrhetinate + 3 oxidized [NADPH--hemoprotein reductase] + 4 H2O + 4 H(+). It carries out the reaction 11-oxo-beta-amyrin + reduced [NADPH--hemoprotein reductase] + O2 = 30-hydroxy-11-oxo-beta-amyrin + oxidized [NADPH--hemoprotein reductase] + H2O + H(+). The catalysed reaction is 30-hydroxy-11-oxo-beta-amyrin + reduced [NADPH--hemoprotein reductase] + O2 = glycyrrhetaldehyde + oxidized [NADPH--hemoprotein reductase] + 2 H2O + H(+). It catalyses the reaction glycyrrhetaldehyde + reduced [NADPH--hemoprotein reductase] + O2 = glycyrrhetinate + oxidized [NADPH--hemoprotein reductase] + H2O + 2 H(+). Involved in the biosynthesis of Glycyrrhetinic acid (GA), a natural product which exhibits anti-inflammatory activity. Involved in the biosynthesis of the triterpenoid saponin glycyrrhizin. Catalyzes three sequential oxidation steps at C-30 of 11-oxo-beta-amyrin. Also able to catalyze C-30 monohydroxylation of beta-amyrin to produce 30-hydroxy-beta-amyrin. May be also responsible for the oxidation at positions C-22 and C-29 in addition to C-30. The sequence is that of 11-oxo-beta-amyrin 30-oxidase from Glycyrrhiza uralensis (Chinese licorice).